The chain runs to 552 residues: Envelope glycoprotein E (552 aa).

The signal sequence occupies residues 1–20 (MDRGAVVGFLLGVCVVSCLA). The Virion surface portion of the chain corresponds to 21–421 (GTPKTSWRRV…HAPPTHGALR (401 aa)). The segment at 63 to 88 (CGPLHPSWXSLMPPKQVPETVVDAAC) is interaction with gI. Asparagine 124 carries an N-linked (GlcNAc...) asparagine; by host glycan. Positions 162-216 (QPAPVPTPPPTPADYDEDDNDEGEGEDESLAGTPASGTPRLPPPPAPPRSWPSAP) are disordered. Pro residues predominate over residues 164–173 (APVPTPPPTP). Residues 175–190 (DYDEDDNDEGEGEDES) show a composition bias toward acidic residues. At tyrosine 176 the chain carries Sulfotyrosine; by host. Residues 201 to 211 (RLPPPPAPPRS) show a composition bias toward pro residues. The fc-binding stretch occupies residues 237-382 (SPGEAFSTNV…GHITISTAAX (146 aa)). Asparagine 245 carries N-linked (GlcNAc...) asparagine; by host glycosylation. 3 disulfide bridges follow: cysteine 273/cysteine 299, cysteine 282/cysteine 291, and cysteine 316/cysteine 325. The tract at residues 396–415 (GADLAEPTHPHVGAPPHAPP) is disordered. Residues 405-415 (PHVGAPPHAPP) are compositionally biased toward low complexity. A helical membrane pass occupies residues 422–442 (LGAVMGAALLLSVLGLSVWAC). Residues 443–552 (MTCWRRRAWR…SQASDSSVFW (110 aa)) lie on the Intravirion side of the membrane. 2 short sequence motifs (internalization motif) span residues 465–468 (YIRV) and 474–477 (YADW). Residues 472-497 (ELYADWSSDSEGERDQVPWLAPPERP) are interaction with VP22 and UL11. 2 positions are modified to phosphoserine; by host CK2: serine 478 and serine 479. Residues 478–486 (SSDSEGERD) are acidic. The disordered stretch occupies residues 478-552 (SSDSEGERDQ…SQASDSSVFW (75 aa)). Position 505 is a phosphoserine (serine 505). Residues 543 to 552 (SQASDSSVFW) are compositionally biased toward polar residues.

It belongs to the alphaherpesvirinae glycoprotein E family. As to quaternary structure, interacts with gI; this interaction enhances the Fc receptor function of gE. The heterodimer gE/gI interacts with the Fc part of host IgG. Interacts (via C-terminus) with VP22 tegument protein; this interaction is necessary for the recruitment of VP22 to the Golgi and its packaging into virions. Interacts (via C-terminus) with UL11 tegument protein. Post-translationally, phosphorylated on serines within the acidic cluster. Phosphorylation determines whether endocytosed viral gE traffics to the trans-Golgi network or recycles to the cell membrane. In terms of processing, N-glycosylated, and sulfated.

The protein localises to the virion membrane. It localises to the host cell membrane. It is found in the host cell junction. Its subcellular location is the host Golgi apparatus. The protein resides in the host trans-Golgi network. In terms of biological role, in epithelial cells, the heterodimer gE/gI is required for the cell-to-cell spread of the virus, by sorting nascent virions to cell junctions. Once the virus reaches the cell junctions, virus particles can spread to adjacent cells extremely rapidly through interactions with cellular receptors that accumulate at these junctions. Implicated in basolateral spread in polarized cells. In neuronal cells, gE/gI is essential for the anterograde spread of the infection throughout the host nervous system. Together with US9, the heterodimer gE/gI is involved in the sorting and transport of viral structural components toward axon tips. The heterodimer gE/gI serves as a receptor for the Fc part of host IgG. Dissociation of gE/gI from IgG occurs at acidic pH. May thus be involved in anti-HSV antibodies bipolar bridging, followed by intracellular endocytosis and degradation, thereby interfering with host IgG-mediated immune responses. The protein is Envelope glycoprotein E (gE) of Human herpesvirus 1 (strain F) (HHV-1).